We begin with the raw amino-acid sequence, 66 residues long: Antimicrobial peptide Eval967 (66 aa).

A signal peptide spans M1–A22. Leucine amide is present on L36. Residues G37–D66 constitute a propeptide that is removed on maturation.

This sequence belongs to the non-disulfide-bridged peptide (NDBP) superfamily. Short antimicrobial peptide (group 4) family. Expressed by the venom gland.

Its subcellular location is the secreted. Probable antimicrobial peptide. Has no inhibitory activity against herpes simplex virus type 1 (HSV-1). The chain is Antimicrobial peptide Eval967 from Euscorpiops validus (Scorpion).